Here is a 552-residue protein sequence, read N- to C-terminus: Transcription factor lcsF (552 aa).

Disordered stretches follow at residues 1–132 (MAPA…DLDP), 169–209 (TSSY…ASLS), 232–258 (EATS…HWSS), and 297–349 (ELTS…QHGA). A basic motif region spans residues 31–55 (KDRKEKKRIQNRVAQRSYRSRMKAR). The bZIP domain occupies 31-76 (KDRKEKKRIQNRVAQRSYRSRMKARLGELQSRLQAHEEQKAKEEAE). The tract at residues 56 to 63 (LGELQSRL) is leucine-zipper. The segment covering 64–79 (QAHEEQKAKEEAERCD) has biased composition (basic and acidic residues). Polar residues-rich tracts occupy residues 98–119 (TPPS…NSAS) and 169–186 (TSSY…SLSQ). Over residues 298–347 (LTSTGDLPNATWRPSQQFSGPETTPRSHNAENPTQQQSPINDDTPSTTQH) the composition is skewed to polar residues.

Belongs to the bZIP family.

Its subcellular location is the nucleus. Functionally, transcription factor that regulates the expression of the gene cluster that mediates the biosynthesis of the lipopeptide antibiotics leucinostatins that show extensive biological activities, including antimalarial, antiviral, antibacterial, antifungal, and antitumor activities, as well as phytotoxic. All 20 genes in the cluster are up-regulated to some extent by lcsF, with the exception of lcsL and lcsP, which are down-regulated. The sequence is that of Transcription factor lcsF from Purpureocillium lilacinum (Paecilomyces lilacinus).